Consider the following 359-residue polypeptide: 3-dehydroquinate synthase (359 aa).

Residues 71–76, 105–109, 129–130, K142, and K151 contribute to the NAD(+) site; these read DGEAYK, GVIGD, and TT. Zn(2+)-binding residues include E184, H247, and H264.

It belongs to the sugar phosphate cyclases superfamily. Dehydroquinate synthase family. It depends on Co(2+) as a cofactor. The cofactor is Zn(2+). NAD(+) is required as a cofactor.

It localises to the cytoplasm. It catalyses the reaction 7-phospho-2-dehydro-3-deoxy-D-arabino-heptonate = 3-dehydroquinate + phosphate. Its pathway is metabolic intermediate biosynthesis; chorismate biosynthesis; chorismate from D-erythrose 4-phosphate and phosphoenolpyruvate: step 2/7. In terms of biological role, catalyzes the conversion of 3-deoxy-D-arabino-heptulosonate 7-phosphate (DAHP) to dehydroquinate (DHQ). This chain is 3-dehydroquinate synthase, found in Burkholderia ambifaria (strain ATCC BAA-244 / DSM 16087 / CCUG 44356 / LMG 19182 / AMMD) (Burkholderia cepacia (strain AMMD)).